The sequence spans 103 residues: Small ribosomal subunit protein uS10 (103 aa).

Belongs to the universal ribosomal protein uS10 family. Part of the 30S ribosomal subunit.

Involved in the binding of tRNA to the ribosomes. This is Small ribosomal subunit protein uS10 from Syntrophobacter fumaroxidans (strain DSM 10017 / MPOB).